The chain runs to 452 residues: Alkane uptake protein A (452 aa).

The signal sequence occupies residues Met-1–Ala-36.

It belongs to the OmpP1/FadL family. Interacts with the inner membrane protein AupB.

Its subcellular location is the cell outer membrane. Its function is as follows. Required for growth on alkanes. Probably involved in the uptake of micelle-solubilized alkanes. The protein is Alkane uptake protein A of Marinobacter nauticus (strain ATCC 49840 / DSM 8798 / CIP 103578 / SP17) (Marinobacter hydrocarbonoclasticus).